Reading from the N-terminus, the 144-residue chain is PE family protein PE9 (144 aa).

The region spanning 1-87 is the PE domain; sequence MSYMIATPAA…RTLTGGCGVF (87 aa). The segment at 98–124 is disordered; that stretch reads AAEHRAAGAGRRQRRRRSGDGQWRLRQ.

This sequence belongs to the mycobacterial PE family. As to quaternary structure, forms a complex with PE10. The complex interacts with human TLR4.

The protein localises to the secreted. It is found in the cell wall. The protein resides in the cell surface. Its function is as follows. Together with PE10, induces macrophage apoptosis through human Toll-like receptor 4 (TLR4) signaling pathway. Interaction with TLR4 leads to increased levels of phospho-IRF-3, increase in the transcript levels of IFN-beta and pro-apoptotic genes, up-regulation of IL-10, down-regulation of IL-1b and enhanced levels of macrophage apoptosis. The chain is PE family protein PE9 from Mycobacterium tuberculosis (strain ATCC 25618 / H37Rv).